The chain runs to 585 residues: Putative ABC transporter ATP-binding protein MG187 (585 aa).

The 461-residue stretch at 8-468 (IELKNIVVDF…PANEFVARFL (461 aa)) folds into the ABC transporter domain. 40–47 (GPSGCGKT) lines the ATP pocket.

This sequence belongs to the ABC transporter superfamily.

This chain is Putative ABC transporter ATP-binding protein MG187, found in Mycoplasma genitalium (strain ATCC 33530 / DSM 19775 / NCTC 10195 / G37) (Mycoplasmoides genitalium).